The primary structure comprises 41 residues: Disintegrin obtustatin (41 aa).

Disulfide bonds link Cys1–Cys10, Cys6–Cys29, Cys7–Cys34, and Cys19–Cys36. The 41-residue stretch at 1 to 41 folds into the Disintegrin domain; the sequence is CTTGPCCRQCKLKPAGTTCWKTSLTSHYCTGKSCDCPLYPG. The Cell attachment site; atypical (KTS) signature appears at 21–23; that stretch reads KTS.

Belongs to the disintegrin family. Short disintegrin subfamily. As to quaternary structure, monomer. In terms of tissue distribution, expressed by the venom gland.

The protein localises to the secreted. Functionally, is a potent and selective inhibitor of alpha-1/beta-1 (ITGA1/ITGB1) integrin. It blocks the adhesion of alpha-1/beta-1-expressing K562 cells to immobilized collagens IV and I with IC(50) of 2 and 0.5 nM, respectively. Potently inhibits angiogenesis in chicken and in mouse model and reduces tumor development by half. Is 25-fold less potent than viperistatin. This chain is Disintegrin obtustatin, found in Macrovipera lebetina obtusa (Levant blunt-nosed viper).